A 448-amino-acid chain; its full sequence is Glutamate--tRNA ligase 1 (448 aa).

Residues 9-19 (PSPTGKLHIGN) carry the 'HIGH' region motif. A 'KMSKS' region motif is present at residues 240–244 (KISKR). Lysine 243 contacts ATP.

This sequence belongs to the class-I aminoacyl-tRNA synthetase family. Glutamate--tRNA ligase type 1 subfamily. As to quaternary structure, monomer.

The protein localises to the cytoplasm. The catalysed reaction is tRNA(Glu) + L-glutamate + ATP = L-glutamyl-tRNA(Glu) + AMP + diphosphate. Functionally, catalyzes the attachment of glutamate to tRNA(Glu) in a two-step reaction: glutamate is first activated by ATP to form Glu-AMP and then transferred to the acceptor end of tRNA(Glu). The protein is Glutamate--tRNA ligase 1 of Orientia tsutsugamushi (strain Ikeda) (Rickettsia tsutsugamushi).